A 59-amino-acid chain; its full sequence is MFTLKKSLLLLLFLGTINLSLSEQERDAKEERRDEMDVEVEKRNILNTIINLAKKILGK.

Residues 1–22 (MFTLKKSLLLLLFLGTINLSLS) form the signal peptide. A coiled-coil region spans residues 16 to 44 (TINLSLSEQERDAKEERRDEMDVEVEKRN). Positions 23–41 (EQERDAKEERRDEMDVEVE) are excised as a propeptide. L57 is modified (leucine amide).

In terms of tissue distribution, expressed by the skin glands.

It is found in the secreted. In terms of biological role, has antimicrobial activity against some Gram-positive bacteria and fungi but has no activity against a range of Gram-negative bacteria except P.faecalis. Active against the Gram-positive bacteria S.aureus ATCC 25923 (MIC=4.8 uM), S.carnosus KHS (MIC=19 uM), B.licheniformis X39 (MIC=19 uM) and R.rhodochrous X15 (MIC=2.4 uM) but is inactive against E.faecium 091299 and E.faecalis 981. Has a less potent antimicrobial activity against the Gram-negative bacterium P.faecalis X29 (MIC=37.5 uM) and is inactive against E.coli, P.aeruginosa and S.typhi. Has antifungal activity against C.albicans ATCC 2002 (MIC=9.5 uM) and is also active against the slime mold 090223 (MIC=9.5 uM). Has extremely low hemolytic activity against human erythrocytes (LC(50)=300 uM). The sequence is that of Temporin-HN2 from Odorrana hainanensis (Odor frog).